Consider the following 435-residue polypeptide: Succinate--CoA ligase [ADP-forming] subunit beta, mitochondrial (435 aa).

A mitochondrion-targeting transit peptide spans 1 to 20 (MIGRISQPLLNTSQKFMAPA). Positions 32–259 (MKILQNYEIK…SNAEFRQAKL (228 aa)) constitute an ATP-grasp domain. Residues Lys-69 and 76-78 (GRG) contribute to the ATP site. Residues Asn-229 and Asp-243 each coordinate Mg(2+). Substrate-binding positions include Asn-294 and 352-354 (GIM).

This sequence belongs to the succinate/malate CoA ligase beta subunit family. ATP-specific subunit beta subfamily. As to quaternary structure, heterodimer of an alpha and a beta subunit. The beta subunit determines specificity for ATP. It depends on Mg(2+) as a cofactor.

The protein localises to the mitochondrion. The catalysed reaction is succinate + ATP + CoA = succinyl-CoA + ADP + phosphate. It participates in carbohydrate metabolism; tricarboxylic acid cycle; succinate from succinyl-CoA (ligase route): step 1/1. Functionally, ATP-specific succinyl-CoA synthetase functions in the citric acid cycle (TCA), coupling the hydrolysis of succinyl-CoA to the synthesis of ATP and thus represents the only step of substrate-level phosphorylation in the TCA. The beta subunit provides nucleotide specificity of the enzyme and binds the substrate succinate, while the binding sites for coenzyme A and phosphate are found in the alpha subunit. This is Succinate--CoA ligase [ADP-forming] subunit beta, mitochondrial from Caenorhabditis elegans.